The sequence spans 76 residues: Protein CYSTEINE-RICH TRANSMEMBRANE MODULE 11 (76 aa).

The tract at residues 19–45 (GPPPPVGVPPQYYPPPPPPPPPPPPPR) is disordered. A helical membrane pass occupies residues 47 to 63 (VGFLEGLLAALCCCCLV).

Belongs to the CYSTM1 family. Heterodimers. Interacts with CYSTM6, CYSTM7 and WIH1/CYSTM13. In terms of tissue distribution, mostly expressed in stems, siliques, leaves and flowers and, to a lower extent, in roots.

Its subcellular location is the cell membrane. It localises to the cytoplasm. Involved in resistance to abiotic stress. This chain is Protein CYSTEINE-RICH TRANSMEMBRANE MODULE 11, found in Arabidopsis thaliana (Mouse-ear cress).